The sequence spans 352 residues: N-terminal EF-hand calcium-binding protein 1 (352 aa).

At Ser4 the chain carries Phosphoserine. EF-hand domains are found at residues Lys26–Ser61 and Leu60–Glu95. Positions 39, 41, 43, 45, and 50 each coordinate Ca(2+). A coiled-coil region spans residues Leu135–Gln163. Residues Gly180–Val202 form a disordered region. Positions His190–Val202 are enriched in polar residues. Ser192 and Ser197 each carry phosphoserine. Residues Glu209–Tyr275 are a coiled coil. The ABM domain occupies Met252–Met340.

In terms of assembly, interacts with STX1. May interact with CPNE6.

The protein localises to the cytoplasm. This Pongo abelii (Sumatran orangutan) protein is N-terminal EF-hand calcium-binding protein 1 (NECAB1).